A 377-amino-acid polypeptide reads, in one-letter code: Guanine nucleotide-binding protein subunit beta-1 (377 aa).

WD repeat units follow at residues 63-93 (GHTG…IVWN), 105-135 (LPCA…SIFN), 154-185 (GHKG…VLWD), 202-233 (GHTA…RLWD), 246-276 (GHEG…RLFD), 293-323 (GDIP…YVWD), and 339-369 (SHEG…KIWA).

It belongs to the WD repeat G protein beta family. As to quaternary structure, g proteins are composed of 3 units, alpha, beta and gamma.

Its function is as follows. Guanine nucleotide-binding proteins (G proteins) are involved as a modulator or transducer in various transmembrane signaling systems. The beta and gamma chains are required for the GTPase activity, for replacement of GDP by GTP, and for G protein-effector interaction. The protein is Guanine nucleotide-binding protein subunit beta-1 of Nicotiana tabacum (Common tobacco).